Reading from the N-terminus, the 309-residue chain is Ribonuclease Z (309 aa).

Positions 63, 65, 67, 68, 145, 216, and 274 each coordinate Zn(2+). The Proton acceptor role is filled by aspartate 67.

The protein belongs to the RNase Z family. In terms of assembly, homodimer. It depends on Zn(2+) as a cofactor.

The catalysed reaction is Endonucleolytic cleavage of RNA, removing extra 3' nucleotides from tRNA precursor, generating 3' termini of tRNAs. A 3'-hydroxy group is left at the tRNA terminus and a 5'-phosphoryl group is left at the trailer molecule.. Zinc phosphodiesterase, which displays some tRNA 3'-processing endonuclease activity. Probably involved in tRNA maturation, by removing a 3'-trailer from precursor tRNA. This is Ribonuclease Z from Streptococcus equi subsp. equi (strain 4047).